Consider the following 156-residue polypeptide: S-ribosylhomocysteine lyase (156 aa).

Fe cation is bound by residues H56, H60, and C123.

It belongs to the LuxS family. Homodimer. Requires Fe cation as cofactor.

It catalyses the reaction S-(5-deoxy-D-ribos-5-yl)-L-homocysteine = (S)-4,5-dihydroxypentane-2,3-dione + L-homocysteine. Its function is as follows. Involved in the synthesis of autoinducer 2 (AI-2) which is secreted by bacteria and is used to communicate both the cell density and the metabolic potential of the environment. The regulation of gene expression in response to changes in cell density is called quorum sensing. Catalyzes the transformation of S-ribosylhomocysteine (RHC) to homocysteine (HC) and 4,5-dihydroxy-2,3-pentadione (DPD). In Staphylococcus saprophyticus subsp. saprophyticus (strain ATCC 15305 / DSM 20229 / NCIMB 8711 / NCTC 7292 / S-41), this protein is S-ribosylhomocysteine lyase.